Here is a 520-residue protein sequence, read N- to C-terminus: MAGCTRKLTHLRKRIHRPRRRTTRRWKRWFKFRKRKGEKRPRPNHKAVARRAKLKFSTSEKLHWPEQELAKKSILNAEDSLIIDNKRSISHLSSGVLKDIFTTGTSSYNVLLQSKEEKKYHSQKQSSSTYSKRCRKPSKSPNTSRSKDPRRMKALVPVTSSGTWYCLERRPAVFVTSSVSSPVKFTHDISVTGNGIVLPPKPKSKVKWCHFSTLPKPKPQLSRSFEKGDDFSGKKFCILTAIKPTNLEKEKLRFFKSDYTYNPQFEYANPALPSVLAKHSHASDRFLKQIVVHLTEDLLSRASMTVVNGCPTLTINVSTAREHWLEGMLRHEIGTHYFRGINNLQQPWNSWTGRKKHELKPNNPTEEGLASIHSVLFRKDPFLWRAALLYYTVYQASQMSFCELFKDIGRFVKDPNTRWDYCVRAKRGWTDTSQPGCFSKDQVYLDGILQILRYRDTIDFHLLTALGKVSYEDVDRLKGLAVTENMRVPHFLQDHGRYMEHLEKIMEVNELTDRELKDLI.

The tract at residues 116–153 (EEKKYHSQKQSSSTYSKRCRKPSKSPNTSRSKDPRRMK) is disordered. His-331 is a binding site for Zn(2+). Glu-332 (nucleophile) is an active-site residue. Zn(2+) contacts are provided by His-336 and Glu-367.

Zn(2+) serves as cofactor.

Putative tyrosine carboxypeptidase. This chain is Putative tyrosine carboxypeptidase MATCAP2, found in Homo sapiens (Human).